A 720-amino-acid polypeptide reads, in one-letter code: Polyribonucleotide nucleotidyltransferase (720 aa).

Aspartate 487 and aspartate 493 together coordinate Mg(2+). The region spanning 554-613 is the KH domain; that stretch reads PRIETFKIPTDKIREVIGTGGKVIREIVEKTGAKINIEDDGTVKVASNDGEAMKAAIKWI. Positions 623 to 691 constitute an S1 motif domain; sequence GQIYEGTVVK…DRGKTRLSMK (69 aa). The disordered stretch occupies residues 691-720; sequence KAVDQQTGEDLEAAGHKAEKADAPREAAGE. Positions 703–720 are enriched in basic and acidic residues; that stretch reads AAGHKAEKADAPREAAGE.

This sequence belongs to the polyribonucleotide nucleotidyltransferase family. Mg(2+) serves as cofactor.

It is found in the cytoplasm. It catalyses the reaction RNA(n+1) + phosphate = RNA(n) + a ribonucleoside 5'-diphosphate. In terms of biological role, involved in mRNA degradation. Catalyzes the phosphorolysis of single-stranded polyribonucleotides processively in the 3'- to 5'-direction. The polypeptide is Polyribonucleotide nucleotidyltransferase (Nitrobacter hamburgensis (strain DSM 10229 / NCIMB 13809 / X14)).